The following is a 248-amino-acid chain: Small ribosomal subunit protein uS2 (248 aa).

The protein belongs to the universal ribosomal protein uS2 family.

The polypeptide is Small ribosomal subunit protein uS2 (Janthinobacterium sp. (strain Marseille) (Minibacterium massiliensis)).